We begin with the raw amino-acid sequence, 272 residues long: Phosphate import ATP-binding protein PstB 1 (272 aa).

In terms of domain architecture, ABC transporter spans 26-267 (LEIRNLDLRY…PKKRKTEDYI (242 aa)). 58–65 (GPSGCGKS) serves as a coordination point for ATP.

This sequence belongs to the ABC transporter superfamily. Phosphate importer (TC 3.A.1.7) family. As to quaternary structure, the complex is composed of two ATP-binding proteins (PstB), two transmembrane proteins (PstC and PstA) and a solute-binding protein (PstS).

The protein resides in the cell inner membrane. The enzyme catalyses phosphate(out) + ATP + H2O = ADP + 2 phosphate(in) + H(+). Its function is as follows. Part of the ABC transporter complex PstSACB involved in phosphate import. Responsible for energy coupling to the transport system. The polypeptide is Phosphate import ATP-binding protein PstB 1 (Shewanella oneidensis (strain ATCC 700550 / JCM 31522 / CIP 106686 / LMG 19005 / NCIMB 14063 / MR-1)).